Here is a 124-residue protein sequence, read N- to C-terminus: Small ribosomal subunit protein uS12 (124 aa).

Asp89 carries the post-translational modification 3-methylthioaspartic acid. Positions Gln105–Ser124 are disordered. Residues Lys108–Gly118 show a composition bias toward basic residues.

This sequence belongs to the universal ribosomal protein uS12 family. In terms of assembly, part of the 30S ribosomal subunit. Contacts proteins S8 and S17. May interact with IF1 in the 30S initiation complex.

Its function is as follows. With S4 and S5 plays an important role in translational accuracy. Interacts with and stabilizes bases of the 16S rRNA that are involved in tRNA selection in the A site and with the mRNA backbone. Located at the interface of the 30S and 50S subunits, it traverses the body of the 30S subunit contacting proteins on the other side and probably holding the rRNA structure together. The combined cluster of proteins S8, S12 and S17 appears to hold together the shoulder and platform of the 30S subunit. This is Small ribosomal subunit protein uS12 from Mycobacterium leprae (strain Br4923).